Here is a 267-residue protein sequence, read N- to C-terminus: Large ribosomal subunit protein uL4 (267 aa).

This sequence belongs to the universal ribosomal protein uL4 family. As to quaternary structure, part of the 50S ribosomal subunit.

One of the primary rRNA binding proteins, this protein initially binds near the 5'-end of the 23S rRNA. It is important during the early stages of 50S assembly. It makes multiple contacts with different domains of the 23S rRNA in the assembled 50S subunit and ribosome. In terms of biological role, forms part of the polypeptide exit tunnel. The protein is Large ribosomal subunit protein uL4 of Saccharolobus solfataricus (strain ATCC 35092 / DSM 1617 / JCM 11322 / P2) (Sulfolobus solfataricus).